The primary structure comprises 393 residues: tRNA(Met) cytidine acetate ligase (393 aa).

Residues Gly-81, Asn-142, and Arg-167 each coordinate ATP.

Belongs to the TmcAL family.

The protein localises to the cytoplasm. The enzyme catalyses cytidine(34) in elongator tRNA(Met) + acetate + ATP = N(4)-acetylcytidine(34) in elongator tRNA(Met) + AMP + diphosphate. Catalyzes the formation of N(4)-acetylcytidine (ac(4)C) at the wobble position of elongator tRNA(Met), using acetate and ATP as substrates. First activates an acetate ion to form acetyladenylate (Ac-AMP) and then transfers the acetyl group to tRNA to form ac(4)C34. The protein is tRNA(Met) cytidine acetate ligase of Bacillus cereus (strain AH187).